The following is a 539-amino-acid chain: Protein lin-14 (539 aa).

Disordered stretches follow at residues 162–230 (PTLP…SNHS) and 262–293 (ETAPPLRVAPPINGTTNGTAKAGGPERKPRKP). Composition is skewed to polar residues over residues 163 to 183 (TLPNGQIPTTIGETSLQGTDD) and 193 to 214 (SVDSNGQKTDSSAASAGDNQNI). A compositionally biased stretch (low complexity) spans 274–284 (NGTTNGTAKAG). The interval 296 to 440 (DDIVKIVRNQ…CRRVRHAKKT (145 aa)) is involved in sequence-specific DNA-binding.

Post-translationally, cleaved by caspase ced-3 in vitro. As to expression, high levels in hypodermal, intestinal, body wall muscle, nerve ring, and ventral nerve cord cells of embryos and L1 animals.

The protein localises to the nucleus. In terms of biological role, heterochronic protein which controls the choice of stage specific cell fates. Involved in the temporal progression of vulval fate patterning, possibly by inhibiting lin-12. Acts as a transcription factor involved in the stage-specific repression of various genes, including insulin/insulin-like growth factor gene ins-33 and neuropeptide-encoding gene nlp-45. Binds to the consensus sequence 5'-[CT]GGA[AG]-3' in the regulatory elements of target genes. Plays a role in governing the developmental timing of male tail tip morphogenesis. Plays a role in controlling the timing of seam cell development during the larval stages. Plays a role in promoting survival at high temperatures in larvae. Involved in maintenance of the architecture of the ventral nerve cord, perhaps acting via modulating expression of the immunoglobulin domain gene zig-4. Functionally, may specify L2 and later cell fates, creating a temporal switch. May be involved in specifying L1 cell fates. The polypeptide is Protein lin-14 (Caenorhabditis elegans).